A 497-amino-acid polypeptide reads, in one-letter code: Probable malate:quinone oxidoreductase (497 aa).

Belongs to the MQO family. The cofactor is FAD.

The catalysed reaction is (S)-malate + a quinone = a quinol + oxaloacetate. Its pathway is carbohydrate metabolism; tricarboxylic acid cycle; oxaloacetate from (S)-malate (quinone route): step 1/1. The protein is Probable malate:quinone oxidoreductase of Hahella chejuensis (strain KCTC 2396).